Consider the following 286-residue polypeptide: Shikimate dehydrogenase (NADP(+)) (286 aa).

Shikimate contacts are provided by residues Ser-22 to Ser-24 and Thr-69. Lys-73 (proton acceptor) is an active-site residue. NADP(+) is bound at residue Glu-85. Positions 94 and 109 each coordinate shikimate. NADP(+) contacts are provided by residues Gly-133–Ala-137 and Val-231. Position 233 (Tyr-233) interacts with shikimate. Gly-254 serves as a coordination point for NADP(+).

Belongs to the shikimate dehydrogenase family. In terms of assembly, homodimer.

It carries out the reaction shikimate + NADP(+) = 3-dehydroshikimate + NADPH + H(+). Its pathway is metabolic intermediate biosynthesis; chorismate biosynthesis; chorismate from D-erythrose 4-phosphate and phosphoenolpyruvate: step 4/7. Involved in the biosynthesis of the chorismate, which leads to the biosynthesis of aromatic amino acids. Catalyzes the reversible NADPH linked reduction of 3-dehydroshikimate (DHSA) to yield shikimate (SA). In Alkaliphilus metalliredigens (strain QYMF), this protein is Shikimate dehydrogenase (NADP(+)).